The sequence spans 624 residues: Phosphomethylpyrimidine synthase (624 aa).

Positions 75–99 are disordered; sequence SPWIESRGDTESYTGRTPFALDDGL. Substrate-binding positions include Asn226, Met255, Tyr284, His320, 340–342, 381–384, and Glu420; these read SRG and DGLR. His424 lines the Zn(2+) pocket. Position 447 (Tyr447) interacts with substrate. Zn(2+) is bound at residue His488. Residues Cys568, Cys571, and Cys576 each coordinate [4Fe-4S] cluster.

The protein belongs to the ThiC family. In terms of assembly, homodimer. [4Fe-4S] cluster is required as a cofactor.

It carries out the reaction 5-amino-1-(5-phospho-beta-D-ribosyl)imidazole + S-adenosyl-L-methionine = 4-amino-2-methyl-5-(phosphooxymethyl)pyrimidine + CO + 5'-deoxyadenosine + formate + L-methionine + 3 H(+). Its pathway is cofactor biosynthesis; thiamine diphosphate biosynthesis. In terms of biological role, catalyzes the synthesis of the hydroxymethylpyrimidine phosphate (HMP-P) moiety of thiamine from aminoimidazole ribotide (AIR) in a radical S-adenosyl-L-methionine (SAM)-dependent reaction. The chain is Phosphomethylpyrimidine synthase from Albidiferax ferrireducens (strain ATCC BAA-621 / DSM 15236 / T118) (Rhodoferax ferrireducens).